Reading from the N-terminus, the 249-residue chain is Probable transcriptional regulatory protein OTBS_0251 (249 aa).

It belongs to the TACO1 family.

It is found in the cytoplasm. This is Probable transcriptional regulatory protein OTBS_0251 from Orientia tsutsugamushi (strain Boryong) (Rickettsia tsutsugamushi).